Here is a 2153-residue protein sequence, read N- to C-terminus: MEKYREIHQRVREIAPGTGSALDCMDLLDRLYAVRHDLVDQMIKHDWSDNKDVETPIGQVLLMAGVPNDIIQGMEKKIIPNSPTGQILKSFFKMTPDNFKITGNQIEFIEVTVTADVARGIREKRLKYESGLRFTEELLELEVKKGNLQQVYRISFNVVAVKTDGSNISTQWPSRRNEGVVQQMRLVQADINYVREHLIMQDERASLEAMFNLKFHVTGPRLRYFSIPDYRPQPLCNPTIDGLLQYCKQWLTEEHKFIFKEVSGTNVMGSFEVNEKKHKERYLESRKPRNFLLLQTTIQGSYLPSTISSDQCNTRIGCLEICKNIPETPVQALASDIAFKYISLDKDEVINYYNPRIHFKPGQNVKEPGTLKIGLSQMNPLSKAILDNIGKHKSDKGLFGQAIESINIASQIQLNECSKVIEQILSNLEINISDVSENIPLPKKTTCVDELLGKFYENEITKYMLGILRKTVAWHIGHLIRDITESLIAHSGLRRSKYWSVHAYDHGNVILFILPSKSLEVAGSYIRFFTVFKDGIGLVDNDNTDSKTEIDGITWIYSKVMSIDLNRLLALNIAFEKALLATATWFQYYTEDQGHFPLQHALRSVFSFHLLLCVSQKMKICAIFDNLRYLIPSVTSLYSGYELLIEKFFERPFKSALDVYLYSIIKSLLVSLAQNNKVRFYSKVRLLGLTVDQSTVGASGVYPSLMSRVVYKHYRSLISEATTCFFLFEKGLHGNLTEEAKIHLETVEWARKFNEKENRYGDILMKEGYTIELVENQNVTVEQQLFCQEVVELSAMELNKYLHAKSQVLCANIMNKHWDKPYFSQVRNISLKGMSGSLQEDGHLASSVTLIEAIRFLNSSQINPNVIDMYERTKHCKAQARIVRKYQRTEADRGFFITTLPTRVRLEIIEDYYDAIAKVVPEEYISYGGERKILNIQSALEKALRWASGISEIITSTGKKIRFKRKLMYVSADATKWSPGDNSAKFRRFTQAIYDGLNDDKLKCCVVDSLKNIYETEFFMSRKLHRYIDSMESKSEAVEDFLSFFSGGVSATVKGNWLQGNLNKCSSLFGVAVSLLFKRVWVELFPELECFFEFAHHSDDALFIYGYLEPEDDGTDWFMYVSQQIQAGHYHWHAVNQEMWKSMFNLHEQLLLMGSIRVSPKKTTVSPTNAEFLSTFFEGCAVSIPFIKILLGSLSDLPGLGFFDDLAASQSRCVKALDLGACPQLAQLAIVLCTSKVERLYGTADGMINSPISFLKVNKAHIPIALGGDGSMSIMELATAGIGMADKNILKKAFYSYKHTKRDGDRYILGLFKFLMSLSDDVFQHDRLGEFSFVGKVQWKVFTPKSEFEFYDQYSMTYLQAWSKQHPVYDYIIPRGRDNLLVYLVRKLNDPSIITAMTMQSPLQLRFRMQAKQHMKVCKLEGEWVTFREILAAADSFASTYQPNEKDLDLFNTLVSCTFSKEYAWKDFLNEVRCEVTTARHVHRPKVARTFTVREKDQVIQNPITSVIGYKYASTVDEISDVLDSAFFPDSLSADLQVMKEGVYRELGLDIGLPEVLKRIAPLLYKAGKSRIVIVEGNIEGTAESICSYWLKNMSLIKTIKVKPRKEVLKAVSLYGTKDNLSLQDDLAATRICIEVWRWCKANNQNVQEWFTALYFENQTLYDWIERFRRKGVVPVDPEIQCMALLLYDVLGFKNVLQMQANRRAYSGKQYDAYCVQTYNEETKLYEGDLRVTFNFGLDCARLEVFWDKKEYVLETSITQKHVLRLMMEEVSKELVRCGMRFKTEQVSHTRSLVLFKTESGFEWGKPNIPCIVYKHCALRTGLRTKHPINKEFMINIQSDGFRAIAQMDIESPRFLLAHAYHTLRDVRYQAVQAVGNVWFRTEQHKLFINPIISSGLLENFMKGLPAAIPPAAYSLIMNKAKISVDLFMFNELLALINKNNILDLSGIEETSEGYSTVTSMSSKQWSEEMSLMSDDDIDDDEEFTIALDDIDFEQVDLEEDIQHFLQDESAYVGDLLIQTEEVEVKRIRGVTRILEPVKLIKSWVSKGLAIDKVYNPVGILLMARYMSKNYDFHSVPLALMNPYDLTEFESVVKGWGETINDRFQEIDLEAQRLVREQNIQPEDILPDSLFSFRHVDVLLKRLFPRDPISSFY.

Residues H36, E54, D97, E110, and V111 each contribute to the Mn(2+) site. K124 acts as the For endonuclease activity in catalysis. Residues 957–1143 form the RdRp catalytic domain; that stretch reads TGKKIRFKRK…AVNQEMWKSM (187 aa). D1100 serves as a coordination point for Mg(2+).

It belongs to the Bunyavirales RNA polymerase family. Interacts with the viral nucleoprotein. It depends on Mn(2+) as a cofactor. Requires Mg(2+) as cofactor.

The protein localises to the host cytoplasm. Its subcellular location is the host perinuclear region. The catalysed reaction is RNA(n) + a ribonucleoside 5'-triphosphate = RNA(n+1) + diphosphate. RNA-dependent RNA polymerase, which is responsible for the replication and transcription of the viral RNA genome using antigenomic RNA as an intermediate. During transcription, synthesizes subgenomic RNAs and assures their capping by a cap-snatching mechanism, which involves the endonuclease activity cleaving the host capped pre-mRNAs. These short capped RNAs are then used as primers for viral transcription. Cleaves ssRNA substrates but not DNA. Seems to downregulate the expression of its own and heterologous mRNAs through its endonuclease activity. In Black Creek Canal orthohantavirus (BCCV), this protein is RNA-directed RNA polymerase L.